The following is a 326-amino-acid chain: Putative F-box protein At3g22710 (326 aa).

The region spanning 1-50 (MTMPDLPPDLVEEILSRVPATSVKKLRSTCTQWNAIFKDERFTEKHFSKA) is the F-box domain.

This Arabidopsis thaliana (Mouse-ear cress) protein is Putative F-box protein At3g22710.